A 145-amino-acid chain; its full sequence is D-aminoacyl-tRNA deacylase (145 aa).

A Gly-cisPro motif, important for rejection of L-amino acids motif is present at residues 137 to 138 (GP).

The protein belongs to the DTD family. Homodimer.

It localises to the cytoplasm. The enzyme catalyses glycyl-tRNA(Ala) + H2O = tRNA(Ala) + glycine + H(+). It catalyses the reaction a D-aminoacyl-tRNA + H2O = a tRNA + a D-alpha-amino acid + H(+). Functionally, an aminoacyl-tRNA editing enzyme that deacylates mischarged D-aminoacyl-tRNAs. Also deacylates mischarged glycyl-tRNA(Ala), protecting cells against glycine mischarging by AlaRS. Acts via tRNA-based rather than protein-based catalysis; rejects L-amino acids rather than detecting D-amino acids in the active site. By recycling D-aminoacyl-tRNA to D-amino acids and free tRNA molecules, this enzyme counteracts the toxicity associated with the formation of D-aminoacyl-tRNA entities in vivo and helps enforce protein L-homochirality. This is D-aminoacyl-tRNA deacylase from Yersinia enterocolitica serotype O:8 / biotype 1B (strain NCTC 13174 / 8081).